We begin with the raw amino-acid sequence, 160 residues long: Protein Vago (160 aa).

A signal peptide spans 1–23 (MESISSMIYLVAMMSLIIGGSQA).

In terms of tissue distribution, expressed in fat body.

The protein resides in the secreted. Functionally, probably involved in the antiviral immune response. May have a role in controlling viral load in the adult fat body, after infection with viruses such as the Drosophila C virus. The chain is Protein Vago from Drosophila melanogaster (Fruit fly).